Consider the following 311-residue polypeptide: uncharacterized protein (311 aa).

The N-terminal stretch at 1-13 (MLLSLIFPIAVLG) is a signal peptide. Asn-115 carries an N-linked (GlcNAc...) asparagine glycan.

The protein resides in the secreted. This is an uncharacterized protein from Encephalitozoon cuniculi (strain GB-M1) (Microsporidian parasite).